Reading from the N-terminus, the 491-residue chain is Aspartyl/glutamyl-tRNA(Asn/Gln) amidotransferase subunit B (491 aa).

The protein belongs to the GatB/GatE family. GatB subfamily. As to quaternary structure, heterotrimer of A, B and C subunits.

It catalyses the reaction L-glutamyl-tRNA(Gln) + L-glutamine + ATP + H2O = L-glutaminyl-tRNA(Gln) + L-glutamate + ADP + phosphate + H(+). The enzyme catalyses L-aspartyl-tRNA(Asn) + L-glutamine + ATP + H2O = L-asparaginyl-tRNA(Asn) + L-glutamate + ADP + phosphate + 2 H(+). Its function is as follows. Allows the formation of correctly charged Asn-tRNA(Asn) or Gln-tRNA(Gln) through the transamidation of misacylated Asp-tRNA(Asn) or Glu-tRNA(Gln) in organisms which lack either or both of asparaginyl-tRNA or glutaminyl-tRNA synthetases. The reaction takes place in the presence of glutamine and ATP through an activated phospho-Asp-tRNA(Asn) or phospho-Glu-tRNA(Gln). The polypeptide is Aspartyl/glutamyl-tRNA(Asn/Gln) amidotransferase subunit B (Burkholderia lata (strain ATCC 17760 / DSM 23089 / LMG 22485 / NCIMB 9086 / R18194 / 383)).